The following is a 178-amino-acid chain: Protein RICE FLOWERING LOCUS T 1 (178 aa).

It belongs to the phosphatidylethanolamine-binding protein family. In terms of assembly, interacts with FTIP1. Expressed in leaf vascular tissues. Specifically expressed in the phloem including companion cells.

It localises to the cytoplasm. The protein resides in the nucleus. It is found in the endoplasmic reticulum. Its function is as follows. Probable mobile flower-promoting signal (florigen) that moves from the leaf to the shoot apical meristem (SAM) and induces flowering. Promotes the transition from vegetative growth to flowering under long day (LD) conditions. Acts upstream of MADS14 and MADS15. May also participate in the promotion of flowering under short day (SD) conditions. In Oryza sativa subsp. japonica (Rice), this protein is Protein RICE FLOWERING LOCUS T 1.